The chain runs to 476 residues: Acyl-lipid omega-13 desaturase (476 aa).

The 66-residue stretch at 10–75 (GPALPSIPHQ…HLRVLERFRV (66 aa)) folds into the Cytochrome b5 heme-binding domain. The heme site is built by H37 and H60. Transmembrane regions (helical) follow at residues 146–166 (PFVI…KLWW) and 168–188 (GAFI…AAMV). A Histidine box-1 motif is present at residues 189 to 193 (HDGGH). Positions 224 to 229 (HNILHH) match the Histidine box-2 motif. The next 3 membrane-spanning stretches (helical) occupy residues 267 to 287 (FFSH…ISPL), 315 to 335 (YHST…TPFL), and 343 to 363 (LLLT…IAQV). The Histidine box-3 motif lies at 410 to 414 (QSLHH).

Belongs to the fatty acid desaturase type 1 family.

The protein localises to the membrane. It carries out the reaction a (9Z,12Z)-octadecadienoyl-containing glycerolipid + 2 Fe(II)-[cytochrome b5] + O2 + 2 H(+) = a (5Z,9Z,12Z)-octadecatrienoyl-containing glycerolipid + 2 Fe(III)-[cytochrome b5] + 2 H2O. The catalysed reaction is (9Z,12Z,15Z)-octadecatrienoyl-containing glycerolipid + 2 Fe(II)-[cytochrome b5] + O2 + 2 H(+) = a (5Z,9Z,12Z,15Z)-octadecatetraenoyl-containing glycerolipid + 2 Fe(III)-[cytochrome b5] + 2 H2O. The protein operates within lipid metabolism; polyunsaturated fatty acid biosynthesis. In terms of biological role, front-end desaturase having a omega-13 desaturase activity for omega-9 unsaturated C18/C20 fatty acids. Strong substrate preferences for linoleic acid and alpha-linolenic acid for the production of pinolenic and coniferonic acids respectively. No desaturase activity for dihomo gamma-linolenic acid and eicosatertraenoic acid. The polypeptide is Acyl-lipid omega-13 desaturase (Chlamydomonas reinhardtii (Chlamydomonas smithii)).